The primary structure comprises 369 residues: Histidinol-phosphate aminotransferase 2 (369 aa).

Lysine 229 is subject to N6-(pyridoxal phosphate)lysine.

The protein belongs to the class-II pyridoxal-phosphate-dependent aminotransferase family. Histidinol-phosphate aminotransferase subfamily. Homodimer. Pyridoxal 5'-phosphate is required as a cofactor.

The enzyme catalyses L-histidinol phosphate + 2-oxoglutarate = 3-(imidazol-4-yl)-2-oxopropyl phosphate + L-glutamate. It participates in amino-acid biosynthesis; L-histidine biosynthesis; L-histidine from 5-phospho-alpha-D-ribose 1-diphosphate: step 7/9. The protein is Histidinol-phosphate aminotransferase 2 (hisC2) of Pseudomonas aeruginosa (strain ATCC 15692 / DSM 22644 / CIP 104116 / JCM 14847 / LMG 12228 / 1C / PRS 101 / PAO1).